Here is a 369-residue protein sequence, read N- to C-terminus: Peptide chain release factor 2 (369 aa).

Position 251 is an N5-methylglutamine (Q251).

It belongs to the prokaryotic/mitochondrial release factor family. Methylated by PrmC. Methylation increases the termination efficiency of RF2.

The protein resides in the cytoplasm. Its function is as follows. Peptide chain release factor 2 directs the termination of translation in response to the peptide chain termination codons UGA and UAA. This chain is Peptide chain release factor 2 (prfB), found in Chlamydia muridarum (strain MoPn / Nigg).